We begin with the raw amino-acid sequence, 413 residues long: Multifunctional CCA protein (413 aa).

Glycine 8 and arginine 11 together coordinate ATP. Positions 8 and 11 each coordinate CTP. The Mg(2+) site is built by aspartate 21 and aspartate 23. ATP is bound by residues arginine 91, arginine 137, and arginine 140. CTP-binding residues include arginine 91, arginine 137, and arginine 140. One can recognise an HD domain in the interval 228–329; it reads TGVHTLMTLS…VKLFDAIDAW (102 aa).

This sequence belongs to the tRNA nucleotidyltransferase/poly(A) polymerase family. Bacterial CCA-adding enzyme type 1 subfamily. Monomer. Can also form homodimers and oligomers. The cofactor is Mg(2+). Ni(2+) is required as a cofactor.

It catalyses the reaction a tRNA precursor + 2 CTP + ATP = a tRNA with a 3' CCA end + 3 diphosphate. It carries out the reaction a tRNA with a 3' CCA end + 2 CTP + ATP = a tRNA with a 3' CCACCA end + 3 diphosphate. Its function is as follows. Catalyzes the addition and repair of the essential 3'-terminal CCA sequence in tRNAs without using a nucleic acid template. Adds these three nucleotides in the order of C, C, and A to the tRNA nucleotide-73, using CTP and ATP as substrates and producing inorganic pyrophosphate. tRNA 3'-terminal CCA addition is required both for tRNA processing and repair. Also involved in tRNA surveillance by mediating tandem CCA addition to generate a CCACCA at the 3' terminus of unstable tRNAs. While stable tRNAs receive only 3'-terminal CCA, unstable tRNAs are marked with CCACCA and rapidly degraded. The chain is Multifunctional CCA protein from Salmonella choleraesuis (strain SC-B67).